The chain runs to 1634 residues: DNA polymerase (1634 aa).

DOD-type homing endonuclease domains follow at residues 552 to 693 and 1163 to 1295; these read LIGI…RLGI and FLGF…LVGI.

It belongs to the DNA polymerase type-B family. In terms of processing, this protein undergoes a protein self splicing that involves a post-translational excision of the intervening region (intein) followed by peptide ligation.

It carries out the reaction DNA(n) + a 2'-deoxyribonucleoside 5'-triphosphate = DNA(n+1) + diphosphate. In Methanocaldococcus jannaschii (strain ATCC 43067 / DSM 2661 / JAL-1 / JCM 10045 / NBRC 100440) (Methanococcus jannaschii), this protein is DNA polymerase (pol).